We begin with the raw amino-acid sequence, 216 residues long: Ribosomal RNA small subunit methyltransferase G (216 aa).

S-adenosyl-L-methionine-binding positions include glycine 82, leucine 87, 135–136 (AE), and arginine 148.

This sequence belongs to the methyltransferase superfamily. RNA methyltransferase RsmG family.

It localises to the cytoplasm. It carries out the reaction guanosine(527) in 16S rRNA + S-adenosyl-L-methionine = N(7)-methylguanosine(527) in 16S rRNA + S-adenosyl-L-homocysteine. In terms of biological role, specifically methylates the N7 position of guanine in position 527 of 16S rRNA. This chain is Ribosomal RNA small subunit methyltransferase G, found in Caulobacter vibrioides (strain ATCC 19089 / CIP 103742 / CB 15) (Caulobacter crescentus).